The chain runs to 407 residues: MAVPWLVLLLALPIFFLGVFVWAVFEHFLTTDIPATLQHPAKLRFLHCIFLYLVTLGNIFEKLGICSMPKFIRFLHDSVRIKKDPELVVTDLRFGTIPVRLFQPKAASSRPRRGIIFYHGGATVFGSLDCYHGLCNYLARETESVLLMIGYRKLPDHHSPALFQDCMNASIHFLKALETYGVDPSRVVVCGESVGGAAVAAITQALVGRSDLPRIRAQVLIYPVVQAFCLQLPSFQQNQNVPLLSRKFMVTSLCNYLAIDLSWRDAILNGTCVPPDVWRKYEKWLSPDNIPKKFKNRGYQPWSPGPFNEAAYLEAKHMLDVENSPLIADDEVIAQLPEAFLVSCENDILRDDSLLYKKRLEDQGVRVTWYHLYDGFHGSIIFFDKKALSFPCSLKIVNAVVSYIKGI.

The Cytoplasmic portion of the chain corresponds to 1-4; that stretch reads MAVP. A helical; Signal-anchor for type II membrane protein membrane pass occupies residues 5–25; the sequence is WLVLLLALPIFFLGVFVWAVF. The Lumenal segment spans residues 26-407; it reads EHFLTTDIPA…NAVVSYIKGI (382 aa). An Involved in the stabilization of the negatively charged intermediate by the formation of the oxyanion hole motif is present at residues 119–121; sequence HGG. Asparagine 168 is a glycosylation site (N-linked (GlcNAc...) asparagine). Serine 193 is a catalytic residue. An N-linked (GlcNAc...) asparagine glycan is attached at asparagine 269. Residues aspartate 347 and histidine 377 contribute to the active site.

Belongs to the 'GDXG' lipolytic enzyme family.

It localises to the membrane. The chain is Arylacetamide deacetylase-like 4 (AADACL4) from Homo sapiens (Human).